A 424-amino-acid chain; its full sequence is Elongation factor 1-alpha (424 aa).

In terms of domain architecture, tr-type G spans Lys5–Ile223. Positions Gly14 to Ser21 are G1. Gly14–Ser21 serves as a coordination point for GTP. Residue Ser21 participates in Mg(2+) binding. A G2 region spans residues Gly70–Asp74. Residues Asp91–Gly94 form a G3 region. Residues Asp91 to His95 and Asn148 to Asp151 each bind GTP. The G4 stretch occupies residues Asn148–Asp151. The segment at Ser187 to Tyr189 is G5.

This sequence belongs to the TRAFAC class translation factor GTPase superfamily. Classic translation factor GTPase family. EF-Tu/EF-1A subfamily.

It localises to the cytoplasm. It carries out the reaction GTP + H2O = GDP + phosphate + H(+). Its function is as follows. GTP hydrolase that promotes the GTP-dependent binding of aminoacyl-tRNA to the A-site of ribosomes during protein biosynthesis. In Thermoplasma volcanium (strain ATCC 51530 / DSM 4299 / JCM 9571 / NBRC 15438 / GSS1), this protein is Elongation factor 1-alpha.